The chain runs to 430 residues: RNA pseudouridine synthase 2, chloroplastic (430 aa).

The transit peptide at 1–43 (MLSISQLPSFSLTTAKSLRYPSSPSSSLSIFFSFFPKVSNFVR) directs the protein to the chloroplast. The S4 RNA-binding domain occupies 82–155 (IRLDSWISSR…IPLDIVYEDK (74 aa)). The tract at residues 195–222 (SNSEEDDDSDEETFSDDEEMTTSPSSYA) is disordered. A compositionally biased stretch (acidic residues) spans 196 to 214 (NSEEDDDSDEETFSDDEEM). Residue D234 is part of the active site.

This sequence belongs to the pseudouridine synthase RluA family.

Its subcellular location is the plastid. The protein localises to the chloroplast. The enzyme catalyses a uridine in RNA = a pseudouridine in RNA. The polypeptide is RNA pseudouridine synthase 2, chloroplastic (Arabidopsis thaliana (Mouse-ear cress)).